A 62-amino-acid chain; its full sequence is Large ribosomal subunit protein bL28 (62 aa).

This sequence belongs to the bacterial ribosomal protein bL28 family.

This chain is Large ribosomal subunit protein bL28, found in Acidothermus cellulolyticus (strain ATCC 43068 / DSM 8971 / 11B).